The primary structure comprises 252 residues: 5-oxoprolinase subunit A (252 aa).

This sequence belongs to the LamB/PxpA family. Forms a complex composed of PxpA, PxpB and PxpC.

The enzyme catalyses 5-oxo-L-proline + ATP + 2 H2O = L-glutamate + ADP + phosphate + H(+). In terms of biological role, catalyzes the cleavage of 5-oxoproline to form L-glutamate coupled to the hydrolysis of ATP to ADP and inorganic phosphate. This is 5-oxoprolinase subunit A from Chloroflexus aggregans (strain MD-66 / DSM 9485).